A 162-amino-acid chain; its full sequence is Protein snakeskin (162 aa).

Over 2–6 the chain is Cytoplasmic; the sequence is VSVET. A helical transmembrane segment spans residues 7-27; it reads VGSIFIKALKLIINLVIIFLY. Topologically, residues 28–53 are extracellular; that stretch reads RWGDGGEFLGIGGTWNLNEEKSADAE. The chain crosses the membrane as a helical span at residues 54–74; that stretch reads IVASGVMVGFLIYTGCHTIAF. Over 75-88 the chain is Cytoplasmic; the sequence is AFGTTKHKGELCDT. Residues 89–109 traverse the membrane as a helical segment; that stretch reads IMNVVGCIMWIAVGGVALHYW. Residues 110 to 128 lie on the Extracellular side of the membrane; that stretch reads KGYMSDEGFLYVNSERQVG. Residues 129-149 traverse the membrane as a helical segment; it reads IAMGSLCVIEGALYLLDTVLA. At 150–162 the chain is on the cytoplasmic side; that stretch reads CIHYSKGDTDYTQ.

As to quaternary structure, forms a complex with Tsp2A and mesh. Interacts with mesh; the interaction may be necessary for the localization of both proteins to the cell apicolateral region.

It is found in the apicolateral cell membrane. It localises to the cell junction. Its subcellular location is the septate junction. Functionally, required for assembly of smooth septate junctions (sSJs), together with mesh and Tsp2A. May be important for barrier function of the midgut epithelium. The polypeptide is Protein snakeskin (Drosophila melanogaster (Fruit fly)).